The primary structure comprises 277 residues: uncharacterized protein (277 aa).

The next 4 helical transmembrane spans lie at 37 to 59, 63 to 82, 214 to 236, and 246 to 268; these read YLRY…LYIW, LIFG…PKVI, MLCG…KTYI, and WITS…TYLF.

Its subcellular location is the cell membrane. This is an uncharacterized protein from Bacillus anthracis.